The chain runs to 838 residues: Urease (838 aa).

The Urease domain occupies 400-838; it reads GAIDCHVHFI…VPLSRNYFLF (439 aa). Ni(2+) contacts are provided by His-405, His-407, and Lys-488. N6-carboxylysine is present on Lys-488. His-490 provides a ligand contact to substrate. Residues His-517 and His-543 each contribute to the Ni(2+) site. The active-site Proton donor is His-591. Residue Asp-631 participates in Ni(2+) binding.

It in the C-terminal section; belongs to the metallo-dependent hydrolases superfamily. Urease alpha subunit family. As to quaternary structure, homohexamer. Other oligomeric forms may exist depending on pH and presence of salts. Ni(2+) serves as cofactor. Post-translationally, carboxylation allows a single lysine to coordinate two nickel ions.

The catalysed reaction is urea + 2 H2O + H(+) = hydrogencarbonate + 2 NH4(+). Its pathway is nitrogen metabolism; urea degradation; CO(2) and NH(3) from urea (urease route): step 1/1. Its activity is regulated as follows. Requires the three urease accessory proteins URED, UREF AND UREG for its activation. In terms of biological role, urea hydrolase involved in nitrogen recycling from ureide, purine, and arginine catabolism. This chain is Urease, found in Arabidopsis thaliana (Mouse-ear cress).